A 287-amino-acid chain; its full sequence is Ret finger protein-like 4A-like protein 1 (287 aa).

The segment at 11-53 adopts an RING-type; degenerate zinc-finger fold; it reads CPVCLKDLEEAVQLKCGYACCLQCLNSLQKEPDGEGLLCRFCS. Residues 78–276 form the B30.2/SPRY domain; the sequence is EPKLKSVLTM…LSICSVINPS (199 aa).

This is Ret finger protein-like 4A-like protein 1 (RFPL4AL1) from Homo sapiens (Human).